Here is a 260-residue protein sequence, read N- to C-terminus: RNA polymerase sigma-G factor (260 aa).

Residues 1-71 are recognizes anti-sigma-G factor Gin (csfB); that stretch reads MSRNKVEICG…GEYVDDLFQV (71 aa). Positions 67-80 match the Polymerase core binding motif; that stretch reads DLFQVGCIGLMKSI. A DNA-binding region (H-T-H motif) is located at residues 229–248; that stretch reads QMEVAEEIGISQAQVSRLEK.

It belongs to the sigma-70 factor family. As to quaternary structure, interacts with anti-sigma-G factor Gin (csfB).

With respect to regulation, activity repressed by anti-sigma-G factor Gin (csfB) and Lon protease during the early stages of forespore development. When both Gin and sigma-G are expressed in E.coli Gin inhibits sigma-G activity, strongly suggesting Gin inhibits by direct physical interaction. Functionally, sigma factors are initiation factors that promote the attachment of RNA polymerase to specific initiation sites and are then released. This sigma factor is responsible for the expression of sporulation specific genes in the forespore. The polypeptide is RNA polymerase sigma-G factor (sigG) (Bacillus subtilis (strain 168)).